The sequence spans 172 residues: Adenine phosphoribosyltransferase (172 aa).

The protein belongs to the purine/pyrimidine phosphoribosyltransferase family. As to quaternary structure, homodimer.

The protein resides in the cytoplasm. The enzyme catalyses AMP + diphosphate = 5-phospho-alpha-D-ribose 1-diphosphate + adenine. Its pathway is purine metabolism; AMP biosynthesis via salvage pathway; AMP from adenine: step 1/1. Catalyzes a salvage reaction resulting in the formation of AMP, that is energically less costly than de novo synthesis. This Microcystis aeruginosa (strain NIES-843 / IAM M-2473) protein is Adenine phosphoribosyltransferase.